Consider the following 1072-residue polypeptide: DNA-directed RNA polymerase subunit beta (1072 aa).

Belongs to the RNA polymerase beta chain family. In terms of assembly, in plastids the minimal PEP RNA polymerase catalytic core is composed of four subunits: alpha, beta, beta', and beta''. When a (nuclear-encoded) sigma factor is associated with the core the holoenzyme is formed, which can initiate transcription.

Its subcellular location is the plastid. The protein localises to the chloroplast. It carries out the reaction RNA(n) + a ribonucleoside 5'-triphosphate = RNA(n+1) + diphosphate. DNA-dependent RNA polymerase catalyzes the transcription of DNA into RNA using the four ribonucleoside triphosphates as substrates. The polypeptide is DNA-directed RNA polymerase subunit beta (Nasturtium officinale (Watercress)).